We begin with the raw amino-acid sequence, 246 residues long: MRVILVIGRSNSGKLDFIKALTGSLPKGLDDEAFNNDHSGLIHKYNIRNKYFEASVGIWIEEYSNLAETLDAYSSEEAKEVIDSLGAIVYTFRSFDEAEWSLFKNFIDKLQLEIPVIGLHMSDEKLLEPPDVFTPEYISISEEGVNEFNEKVGLDRVREILDCCEWNLSQVDKSFSEEKDDAGDFYLPERFKGSPDMQSTDLDNLMKEMNQIRDADLEKNEKKAKALNLLEKLLGDEFEENDYESL.

Ser194 is subject to Phosphoserine.

This is an uncharacterized protein from Schizosaccharomyces pombe (strain 972 / ATCC 24843) (Fission yeast).